Here is a 190-residue protein sequence, read N- to C-terminus: Large ribosomal subunit protein bL25 (190 aa).

This sequence belongs to the bacterial ribosomal protein bL25 family. CTC subfamily. As to quaternary structure, part of the 50S ribosomal subunit; part of the 5S rRNA/L5/L18/L25 subcomplex. Contacts the 5S rRNA. Binds to the 5S rRNA independently of L5 and L18.

In terms of biological role, this is one of the proteins that binds to the 5S RNA in the ribosome where it forms part of the central protuberance. In Neisseria meningitidis serogroup C (strain 053442), this protein is Large ribosomal subunit protein bL25.